A 62-amino-acid chain; its full sequence is Photosystem II reaction center protein Z (62 aa).

2 consecutive transmembrane segments (helical) span residues Ala-8–Ala-28 and Trp-41–Val-61.

The protein belongs to the PsbZ family. As to quaternary structure, PSII is composed of 1 copy each of membrane proteins PsbA, PsbB, PsbC, PsbD, PsbE, PsbF, PsbH, PsbI, PsbJ, PsbK, PsbL, PsbM, PsbT, PsbX, PsbY, PsbZ, Psb30/Ycf12, peripheral proteins PsbO, CyanoQ (PsbQ), PsbU, PsbV and a large number of cofactors. It forms dimeric complexes.

The protein localises to the cellular thylakoid membrane. In terms of biological role, may control the interaction of photosystem II (PSII) cores with the light-harvesting antenna, regulates electron flow through the 2 photosystem reaction centers. PSII is a light-driven water plastoquinone oxidoreductase, using light energy to abstract electrons from H(2)O, generating a proton gradient subsequently used for ATP formation. This chain is Photosystem II reaction center protein Z, found in Nostoc punctiforme (strain ATCC 29133 / PCC 73102).